Consider the following 235-residue polypeptide: Purine nucleoside phosphorylase DeoD-type (235 aa).

His-4 lines the a purine D-ribonucleoside pocket. Phosphate-binding positions include Gly-20, Arg-24, Arg-43, and 87–90; that span reads RVGT. Residues 180 to 182 and 204 to 205 each bind a purine D-ribonucleoside; these read EME and SD. Asp-205 serves as the catalytic Proton donor.

It belongs to the PNP/UDP phosphorylase family. As to quaternary structure, homohexamer; trimer of homodimers.

It carries out the reaction a purine D-ribonucleoside + phosphate = a purine nucleobase + alpha-D-ribose 1-phosphate. The catalysed reaction is a purine 2'-deoxy-D-ribonucleoside + phosphate = a purine nucleobase + 2-deoxy-alpha-D-ribose 1-phosphate. In terms of biological role, catalyzes the reversible phosphorolytic breakdown of the N-glycosidic bond in the beta-(deoxy)ribonucleoside molecules, with the formation of the corresponding free purine bases and pentose-1-phosphate. In Oceanobacillus iheyensis (strain DSM 14371 / CIP 107618 / JCM 11309 / KCTC 3954 / HTE831), this protein is Purine nucleoside phosphorylase DeoD-type.